A 224-amino-acid chain; its full sequence is Inhibitor of apoptosis protein (224 aa).

A BIR repeat occupies 29 to 92 (IDARNQSFAI…GFWSRNCGFM (64 aa)). Cysteine 62, cysteine 65, histidine 82, and cysteine 89 together coordinate Zn(2+).

It belongs to the asfivirus IAP family. In terms of assembly, interacts with subunit p17 of host CASP3.

The protein localises to the host cytoplasm. Its subcellular location is the virion. Prevent apoptosis of host cell by inhibiting caspase-3/CASP3 activation to promote the viral replication. Also induces the activation of host NF-kappaB. The chain is Inhibitor of apoptosis protein (p27) from African swine fever virus (isolate Pig/Haiti/H811/1981) (ASFV).